Here is a 269-residue protein sequence, read N- to C-terminus: Novel plant SNARE 13 (269 aa).

Topologically, residues 1-217 are cytoplasmic; that stretch reads MASNLPMSPQ…IGRQVATDKC (217 aa). Residues 33 to 94 are a coiled coil; that stretch reads DKIKDSTRQS…KQSMIKELNS (62 aa). Ser-74 carries the post-translational modification Phosphoserine. Residues 146–208 form the t-SNARE coiled-coil homology domain; that stretch reads MKRMDETDQA…KKASQLVKEI (63 aa). The chain crosses the membrane as a helical; Anchor for type IV membrane protein span at residues 218 to 238; that stretch reads IMGFLFLIVCGVVAIIIVKIV. Residues 239-269 are Vesicular-facing; sequence NPNNKDIRDIPGLAPPAQSRKLLYLRNQDYM.

This sequence belongs to the novel plant SNARE family.

The protein localises to the membrane. Its function is as follows. Vesicle trafficking protein that functions in the secretory pathway. The polypeptide is Novel plant SNARE 13 (NPSN13) (Arabidopsis thaliana (Mouse-ear cress)).